Consider the following 111-residue polypeptide: Ribonuclease P protein component (111 aa).

It belongs to the RnpA family. Consists of a catalytic RNA component (M1 or rnpB) and a protein subunit.

The enzyme catalyses Endonucleolytic cleavage of RNA, removing 5'-extranucleotides from tRNA precursor.. RNaseP catalyzes the removal of the 5'-leader sequence from pre-tRNA to produce the mature 5'-terminus. It can also cleave other RNA substrates such as 4.5S RNA. The protein component plays an auxiliary but essential role in vivo by binding to the 5'-leader sequence and broadening the substrate specificity of the ribozyme. This is Ribonuclease P protein component from Borrelia garinii subsp. bavariensis (strain ATCC BAA-2496 / DSM 23469 / PBi) (Borreliella bavariensis).